The primary structure comprises 1220 residues: DNA-directed RNA polymerase subunit beta' (1220 aa).

C60, C62, C75, and C78 together coordinate Zn(2+). Residues D449, D451, and D453 each coordinate Mg(2+). Zn(2+)-binding residues include C818, C892, C899, and C902.

The protein belongs to the RNA polymerase beta' chain family. In terms of assembly, the RNAP catalytic core consists of 2 alpha, 1 beta, 1 beta' and 1 omega subunit. When a sigma factor is associated with the core the holoenzyme is formed, which can initiate transcription. Mg(2+) is required as a cofactor. Requires Zn(2+) as cofactor.

It carries out the reaction RNA(n) + a ribonucleoside 5'-triphosphate = RNA(n+1) + diphosphate. DNA-dependent RNA polymerase catalyzes the transcription of DNA into RNA using the four ribonucleoside triphosphates as substrates. This chain is DNA-directed RNA polymerase subunit beta', found in Lacticaseibacillus paracasei (strain ATCC 334 / BCRC 17002 / CCUG 31169 / CIP 107868 / KCTC 3260 / NRRL B-441) (Lactobacillus paracasei).